A 197-amino-acid polypeptide reads, in one-letter code: Glycerol-3-phosphate acyltransferase (197 aa).

Transmembrane regions (helical) follow at residues 1–21, 69–89, 110–130, and 152–172; these read MTAL…GLLV, LPML…AVVG, VMLF…LVVL, and VFFT…SFIF.

Belongs to the PlsY family. In terms of assembly, probably interacts with PlsX.

The protein resides in the cell membrane. It carries out the reaction an acyl phosphate + sn-glycerol 3-phosphate = a 1-acyl-sn-glycero-3-phosphate + phosphate. Its pathway is lipid metabolism; phospholipid metabolism. Catalyzes the transfer of an acyl group from acyl-phosphate (acyl-PO(4)) to glycerol-3-phosphate (G3P) to form lysophosphatidic acid (LPA). This enzyme utilizes acyl-phosphate as fatty acyl donor, but not acyl-CoA or acyl-ACP. This chain is Glycerol-3-phosphate acyltransferase, found in Geobacillus kaustophilus (strain HTA426).